Here is a 284-residue protein sequence, read N- to C-terminus: F-box protein PP2-B13 (284 aa).

The region spanning 1 to 44 (MMMLPEACVANILAFTSPADAFSSSEVSSVFRLAGDSDFVWEKF) is the F-box domain.

The polypeptide is F-box protein PP2-B13 (PP2B13) (Arabidopsis thaliana (Mouse-ear cress)).